Consider the following 28-residue polypeptide: leu operon leader peptide (28 aa).

Involved in control of the biosynthesis of leucine. The protein is leu operon leader peptide (leuL) of Salmonella typhimurium (strain LT2 / SGSC1412 / ATCC 700720).